A 382-amino-acid polypeptide reads, in one-letter code: Lipoyl synthase, mitochondrial (382 aa).

A mitochondrion-targeting transit peptide spans 1 to 30; sequence MHGRRHLAASLARALTYAPSRSISSTPSLL. A compositionally biased stretch (polar residues) spans 25–34; the sequence is STPSLLQTLD. Residues 25 to 47 form a disordered region; the sequence is STPSLLQTLDPSTPSPAAAPPTA. Residues cysteine 112, cysteine 117, cysteine 123, cysteine 143, cysteine 147, cysteine 150, and serine 359 each contribute to the [4Fe-4S] cluster site. Residues 128-348 enclose the Radical SAM core domain; the sequence is ETGTATATIM…RSLGVDMGFR (221 aa).

Belongs to the radical SAM superfamily. Lipoyl synthase family. It depends on [4Fe-4S] cluster as a cofactor.

Its subcellular location is the mitochondrion. The enzyme catalyses [[Fe-S] cluster scaffold protein carrying a second [4Fe-4S](2+) cluster] + N(6)-octanoyl-L-lysyl-[protein] + 2 oxidized [2Fe-2S]-[ferredoxin] + 2 S-adenosyl-L-methionine + 4 H(+) = [[Fe-S] cluster scaffold protein] + N(6)-[(R)-dihydrolipoyl]-L-lysyl-[protein] + 4 Fe(3+) + 2 hydrogen sulfide + 2 5'-deoxyadenosine + 2 L-methionine + 2 reduced [2Fe-2S]-[ferredoxin]. Its pathway is protein modification; protein lipoylation via endogenous pathway; protein N(6)-(lipoyl)lysine from octanoyl-[acyl-carrier-protein]: step 2/2. Functionally, catalyzes the radical-mediated insertion of two sulfur atoms into the C-6 and C-8 positions of the octanoyl moiety bound to the lipoyl domains of lipoate-dependent enzymes, thereby converting the octanoylated domains into lipoylated derivatives. The protein is Lipoyl synthase, mitochondrial of Oryza sativa subsp. indica (Rice).